A 74-amino-acid chain; its full sequence is MADALKKGSLIRVNREAYLSSVEAKASAGDPPAYLLEGPGEVLAVKGDYAQLRFRQPVPDIWLRMDQLEAYAGS.

The protein belongs to the complex I NdhO subunit family. As to quaternary structure, NDH-1 can be composed of about 15 different subunits; different subcomplexes with different compositions have been identified which probably have different functions.

Its subcellular location is the cellular thylakoid membrane. The enzyme catalyses a plastoquinone + NADH + (n+1) H(+)(in) = a plastoquinol + NAD(+) + n H(+)(out). It carries out the reaction a plastoquinone + NADPH + (n+1) H(+)(in) = a plastoquinol + NADP(+) + n H(+)(out). Functionally, NDH-1 shuttles electrons from an unknown electron donor, via FMN and iron-sulfur (Fe-S) centers, to quinones in the respiratory and/or the photosynthetic chain. The immediate electron acceptor for the enzyme in this species is believed to be plastoquinone. Couples the redox reaction to proton translocation, and thus conserves the redox energy in a proton gradient. Cyanobacterial NDH-1 also plays a role in inorganic carbon-concentration. This chain is NAD(P)H-quinone oxidoreductase subunit O, found in Synechococcus sp. (strain RCC307).